The sequence spans 243 residues: MPTLEMPVAAVLDSTVGSSEALPDFTSDRYKDAYSRINAIVIEGEQEAHDNYIAIGTLLPDHVEELKRLAKMEMRHKKGFTACGKNLGVEADMDFAREFFAPLRDNFQTALGQGKTPTCLLIQALLIEAFAISAYHTYIPVSDPFARKITEGVVKDEYTHLNYGEAWLKANLESCREELLEANRENLPLIRRMLDQVAGDAAVLQMDKEDLIEDFLIAYQESLTEIGFNTREITRMAAAALVS.

Fe cation is bound by residues Glu-45, Glu-73, His-76, Glu-128, and His-160.

It belongs to the aldehyde decarbonylase family. Binds 2 metal cations per subunit. The catalytic dinuclear metal-binding site could be either a di-iron or a manganese-iron cofactor. is required as a cofactor.

It carries out the reaction a long-chain fatty aldehyde + 2 NADPH + O2 + H(+) = a long-chain alkane + formate + 2 NADP(+) + H2O. Its function is as follows. Catalyzes the decarbonylation of fatty aldehydes to alkanes. Requires the presence of ferredoxin, ferredoxin reductase and NADPH for in vitro decarbonylase activity. Involved in the biosynthesis of alkanes, mainly heptadecane and pentadecane. The sequence is that of Aldehyde decarbonylase from Prochlorococcus marinus (strain MIT 9313).